A 460-amino-acid chain; its full sequence is MPLRLLLLLLWLWGLQWAETDSEGQTTTGELYQRWEHYGQECQKMLETTEPPSGLACNGSFDMYACWNYTAANTTARVSCPWYLPWFRQVSAGFVFRQCGSDGQWGSWRDHTQCENPEKNGAFQDQTLILERLQIMYTVGYSLSLTTLLLALLILSLFRRLHCTRNYIHMNLFTSFMLRAAAILTRDQLLPPLGPYTGDQAPTPWNQALAACRTAQIMTQYCVGANYTWLLVEGVYLHHLLVIVGRSEKGHFRCYLLLGWGAPALFVIPWVIVRYLRENTQCWERNEVKAIWWIIRTPILITILINFLIFIRILGILVSKLRTRQMRCPDYRLRLARSTLTLVPLLGVHEVVFAPVTEEQVEGSLRFAKLAFEIFLSSFQGFLVSVLYCFINKEVQSEIRQGWRHRRLRLSLQEQRPRPHQELAPRAVPLSSACREAAVGNALPSGMLHVPGDEVLESYC.

Positions 1–18 (MPLRLLLLLLWLWGLQWA) are cleaved as a signal peptide. The Extracellular segment spans residues 19–134 (ETDSEGQTTT…DQTLILERLQ (116 aa)). Disulfide bonds link cysteine 42/cysteine 66, cysteine 57/cysteine 99, and cysteine 80/cysteine 114. 3 N-linked (GlcNAc...) asparagine glycosylation sites follow: asparagine 58, asparagine 68, and asparagine 73. A helical transmembrane segment spans residues 135 to 155 (IMYTVGYSLSLTTLLLALLIL). The Cytoplasmic portion of the chain corresponds to 156-166 (SLFRRLHCTRN). A helical membrane pass occupies residues 167–185 (YIHMNLFTSFMLRAAAILT). Residues 186–222 (RDQLLPPLGPYTGDQAPTPWNQALAACRTAQIMTQYC) are Extracellular-facing. The chain crosses the membrane as a helical span at residues 223–243 (VGANYTWLLVEGVYLHHLLVI). Over 244 to 255 (VGRSEKGHFRCY) the chain is Cytoplasmic. Residues 256-276 (LLLGWGAPALFVIPWVIVRYL) traverse the membrane as a helical segment. The Extracellular portion of the chain corresponds to 277 to 297 (RENTQCWERNEVKAIWWIIRT). A helical membrane pass occupies residues 298 to 318 (PILITILINFLIFIRILGILV). At 319–337 (SKLRTRQMRCPDYRLRLAR) the chain is on the cytoplasmic side. Residues 338 to 358 (STLTLVPLLGVHEVVFAPVTE) traverse the membrane as a helical segment. Residues 359-370 (EQVEGSLRFAKL) lie on the Extracellular side of the membrane. Residues 371–391 (AFEIFLSSFQGFLVSVLYCFI) form a helical membrane-spanning segment. Residues 392-460 (NKEVQSEIRQ…PGDEVLESYC (69 aa)) are Cytoplasmic-facing.

The protein belongs to the G-protein coupled receptor 2 family. As to quaternary structure, may form homodimers and heterodimers with GLP1R. Post-translationally, N-glycosylation is required for cell surface expression and lengthens receptor half-life by preventing degradation in the ER.

It localises to the cell membrane. Functionally, this is a receptor for GIP. The activity of this receptor is mediated by G proteins which activate adenylyl cyclase. The sequence is that of Gastric inhibitory polypeptide receptor (Gipr) from Mus musculus (Mouse).